The primary structure comprises 72 residues: Prophage late control protein OgrK (72 aa).

In terms of biological role, cryptic version of the phage P2 OGR protein which acts as an activator of P2 late transcription. The sequence is that of Prophage late control protein OgrK (ogrK) from Escherichia coli (strain K12).